The primary structure comprises 399 residues: MSQYHTFTAHDAVAYAQQFAGIDNPSELVSAQEVGDGNLNLVFKVFDRQGVSRAIVKQALPYVRCVGESWPLTLDRARLEAQTLVAHYQHSPQHTVKIHHFDPELAVMVMEDLSDHRIWRGELIANVYYPQAARQLGDYLAQVLFHTSDFYLHPHEKKAQVAQFINPAMCEITEDLFFNDPYQIHERNNYPAELEADVAALRDDAQLKLAVAALKHRFFAHAEALLHGDIHSGSIFVAEGSLKAIDAEFGYFGPIGFDIGTAIGNLLLNYCGLPGQLGIRDAAAAREQRLNDIHQLWTTFAERFQALAAEKTRDAALAYPGYASAFLKKVWADAVGFCGSELIRRSVGLSHVADIDTIQDDAMRHECLRHAITLGRALIVLAERIDSVDELLARVRQYS.

ATP is bound by residues Asn-40, Lys-57, and 111-113; that span reads EDL. A substrate-binding site is contributed by Asp-229. Position 246–248 (246–248) interacts with ATP; the sequence is DAE. Arg-344 contacts substrate.

Belongs to the methylthioribose kinase family. As to quaternary structure, homodimer.

It carries out the reaction 5-(methylsulfanyl)-D-ribose + ATP = 5-(methylsulfanyl)-alpha-D-ribose 1-phosphate + ADP + H(+). Its pathway is amino-acid biosynthesis; L-methionine biosynthesis via salvage pathway; S-methyl-5-thio-alpha-D-ribose 1-phosphate from S-methyl-5'-thioadenosine (hydrolase route): step 2/2. Functionally, catalyzes the phosphorylation of methylthioribose into methylthioribose-1-phosphate. The protein is Methylthioribose kinase of Klebsiella pneumoniae subsp. pneumoniae (strain ATCC 700721 / MGH 78578).